Here is a 275-residue protein sequence, read N- to C-terminus: uncharacterized protein (275 aa).

Helical transmembrane passes span Leu25–Ala45, Leu70–Ile90, Ile107–Val127, Phe149–Phe169, Ile203–Ala223, and Ile247–Ile267.

The protein resides in the cell membrane. This is an uncharacterized protein from Bacillus subtilis (strain 168).